The sequence spans 360 residues: Olfactory receptor 1L1 (360 aa).

The Extracellular portion of the chain corresponds to 1 to 75 (MERNHNPDNC…GLSSRPEDQK (75 aa)). A glycan (N-linked (GlcNAc...) asparagine) is linked at N55. A helical membrane pass occupies residues 76 to 99 (PLFAVFLPIYLITVIGNLLIILAI). At 100-107 (RSDTRLQT) the chain is on the cytoplasmic side. The helical transmembrane segment at 108-129 (PMYFFLSILSFVDICYVTVIIP) threads the bilayer. The Extracellular portion of the chain corresponds to 130 to 150 (KMLVNFLSETKTISYSECLTQ). A disulfide bond links C147 and C239. Residues 151 to 170 (MYFFLAFGNTDSYLLAAMAI) traverse the membrane as a helical segment. The Cytoplasmic segment spans residues 171–189 (DRYVAICNPFHYITIMSHR). Residues 190–208 (CCVLLLVLSFCIPHFHSLL) traverse the membrane as a helical segment. Residues 209–246 (HILLTNQLIFCASNVIHHFFCDDQPVLKLSCSSHFVKE) lie on the Extracellular side of the membrane. The chain crosses the membrane as a helical span at residues 247–269 (ITVMTEGLAVIMTPFSCIIISYL). At 270-286 (RILITVLKIPSAAGKRK) the chain is on the cytoplasmic side. Residues 287 to 309 (AFSTCGSHLTVVTLFYGSISYLY) traverse the membrane as a helical segment. Topologically, residues 310-321 (FQPLSNYTVKDQ) are extracellular. N-linked (GlcNAc...) asparagine glycosylation occurs at N315. The helical transmembrane segment at 322–341 (IATIIYTVLTPMLNPFIYSL) threads the bilayer. At 342-360 (RNKDMKQGLAKLMHRMKCQ) the chain is on the cytoplasmic side.

Belongs to the G-protein coupled receptor 1 family.

Its subcellular location is the cell membrane. Odorant receptor. In Homo sapiens (Human), this protein is Olfactory receptor 1L1 (OR1L1).